A 344-amino-acid chain; its full sequence is UDP-3-O-acylglucosamine N-acyltransferase (344 aa).

His-248 acts as the Proton acceptor in catalysis.

It belongs to the transferase hexapeptide repeat family. LpxD subfamily. As to quaternary structure, homotrimer.

It catalyses the reaction a UDP-3-O-[(3R)-3-hydroxyacyl]-alpha-D-glucosamine + a (3R)-hydroxyacyl-[ACP] = a UDP-2-N,3-O-bis[(3R)-3-hydroxyacyl]-alpha-D-glucosamine + holo-[ACP] + H(+). Its pathway is bacterial outer membrane biogenesis; LPS lipid A biosynthesis. Its function is as follows. Catalyzes the N-acylation of UDP-3-O-acylglucosamine using 3-hydroxyacyl-ACP as the acyl donor. Is involved in the biosynthesis of lipid A, a phosphorylated glycolipid that anchors the lipopolysaccharide to the outer membrane of the cell. This Prochlorococcus marinus (strain MIT 9312) protein is UDP-3-O-acylglucosamine N-acyltransferase.